A 371-amino-acid polypeptide reads, in one-letter code: Dual-specificity RNA methyltransferase RlmN (371 aa).

Glu-86 serves as the catalytic Proton acceptor. The region spanning 105–338 is the Radical SAM core domain; it reads RHARYTICVS…CTIRQSKGLD (234 aa). Cysteines 112 and 343 form a disulfide. [4Fe-4S] cluster-binding residues include Cys-119, Cys-123, and Cys-126. S-adenosyl-L-methionine is bound by residues 169–170, Ser-201, 224–226, and Asn-300; these read GE and SLH. Residue Cys-343 is the S-methylcysteine intermediate of the active site. The span at 348–363 shows a compositional bias: polar residues; it reads QRSQNLSPSNNNTSKP. The segment at 348–371 is disordered; the sequence is QRSQNLSPSNNNTSKPSDIKKSES.

Belongs to the radical SAM superfamily. RlmN family. Requires [4Fe-4S] cluster as cofactor.

The protein resides in the cytoplasm. It catalyses the reaction adenosine(2503) in 23S rRNA + 2 reduced [2Fe-2S]-[ferredoxin] + 2 S-adenosyl-L-methionine = 2-methyladenosine(2503) in 23S rRNA + 5'-deoxyadenosine + L-methionine + 2 oxidized [2Fe-2S]-[ferredoxin] + S-adenosyl-L-homocysteine. The catalysed reaction is adenosine(37) in tRNA + 2 reduced [2Fe-2S]-[ferredoxin] + 2 S-adenosyl-L-methionine = 2-methyladenosine(37) in tRNA + 5'-deoxyadenosine + L-methionine + 2 oxidized [2Fe-2S]-[ferredoxin] + S-adenosyl-L-homocysteine. Specifically methylates position 2 of adenine 2503 in 23S rRNA and position 2 of adenine 37 in tRNAs. m2A2503 modification seems to play a crucial role in the proofreading step occurring at the peptidyl transferase center and thus would serve to optimize ribosomal fidelity. The chain is Dual-specificity RNA methyltransferase RlmN from Campylobacter curvus (strain 525.92).